Reading from the N-terminus, the 696-residue chain is ATP-dependent zinc metalloprotease FtsH (696 aa).

Residues 1-29 (MWLQVTNCSTLHSSLSYCGANTLSDMAKN) lie on the Cytoplasmic side of the membrane. The helical transmembrane segment at 30-50 (LILWLVIAVVLMSVFQSFGPS) threads the bilayer. The Periplasmic portion of the chain corresponds to 51–124 (DSAGRQVDYT…LGTPPEEPSL (74 aa)). A helical transmembrane segment spans residues 125 to 145 (LASIFISWFPMLLLIGVWVFF). Residues 146–696 (MRQMQGGGGG…APKEDDKPQA (551 aa)) lie on the Cytoplasmic side of the membrane. ATP is bound at residue 219 to 226 (GPPGTGKT). Histidine 441 provides a ligand contact to Zn(2+). The active site involves glutamate 442. Residues histidine 445 and aspartate 519 each contribute to the Zn(2+) site. Residues 627 to 696 (RAPKGWGDTD…APKEDDKPQA (70 aa)) form a disordered region. Basic and acidic residues predominate over residues 650-696 (PEAKTESAPEAKAEANVETEEKPVAADSEELKPKAEQAPKEDDKPQA).

This sequence in the central section; belongs to the AAA ATPase family. In the C-terminal section; belongs to the peptidase M41 family. As to quaternary structure, homohexamer. Zn(2+) serves as cofactor.

It is found in the cell inner membrane. Functionally, acts as a processive, ATP-dependent zinc metallopeptidase for both cytoplasmic and membrane proteins. Plays a role in the quality control of integral membrane proteins. This chain is ATP-dependent zinc metalloprotease FtsH, found in Photobacterium profundum (strain SS9).